The primary structure comprises 325 residues: Outer spore wall protein LDS1 (325 aa).

The Cytoplasmic portion of the chain corresponds to 1–91; the sequence is MSFTGSLALA…NTNKSSYSTT (91 aa). Residues 92-112 traverse the membrane as a helical segment; sequence MLGILSSYLIMFALVSFVYWA. The Extracellular portion of the chain corresponds to 113 to 118; that stretch reads TITPMY. The chain crosses the membrane as a helical span at residues 119–139; that stretch reads TAFLIVLGPIGLFIAIFHSFL. Residues 140-208 are Cytoplasmic-facing; it reads QANVFTLLFM…VKYMLGLSVL (69 aa). The chain crosses the membrane as a helical span at residues 209–229; sequence FVLLVISFFPLIGPILFHILI. The Extracellular segment spans residues 230-263; that stretch reads SPFITQIYFTKVLRLQNFDNIQRRENIYLHAGQY. A helical transmembrane segment spans residues 264–284; that stretch reads ASFGFLAGLIESVPILAGFAI. At 285–325 the chain is on the cytoplasmic side; it reads STNTIGSVLFNLDHPMVPENLVETQAEIEAAPQDINQQPNQ.

Belongs to the LDS family.

It is found in the prospore membrane. It localises to the lipid droplet. The protein localises to the spore wall. In terms of biological role, involved in spore wall assembly. The chain is Outer spore wall protein LDS1 from Saccharomyces cerevisiae (strain ATCC 204508 / S288c) (Baker's yeast).